A 118-amino-acid polypeptide reads, in one-letter code: Transcription factor PAR2 (118 aa).

The disordered stretch occupies residues 1 to 59 (MEKTLATSHTKRSSPPSPSSAVNTSSTGFNRRTRQRLSDATASVSETDVEDEDEDEEGV). Polar residues predominate over residues 19–30 (SSAVNTSSTGFN). In terms of domain architecture, bHLH spans 43–92 (SVSETDVEDEDEDEEGVEEKIEALQTIVPGGTELGVDALFEETASYILAL). Residues 47–59 (TDVEDEDEDEEGV) show a composition bias toward acidic residues.

The protein belongs to the bHLH protein family. Homodimer.

It is found in the nucleus. Functionally, atypical bHLH transcription factor that acts as a negative regulator of a variety of shade avoidance syndrome (SAS) responses, including seedling elongation and photosynthetic pigment accumulation. Acts as a direct transcriptional repressor of two auxin-responsive genes, SAUR15 and SAUR68. May function in integrating shade and hormone transcriptional networks in response to light and auxin changes. The sequence is that of Transcription factor PAR2 (PAR2) from Arabidopsis thaliana (Mouse-ear cress).